We begin with the raw amino-acid sequence, 218 residues long: PKHD-type hydroxylase IL0759 (218 aa).

The Fe2OG dioxygenase domain occupies 76–170 (QVARVTINRY…RLAMIGWVQS (95 aa)). Positions 94, 96, and 151 each coordinate Fe cation. Arginine 161 is a 2-oxoglutarate binding site.

Requires Fe(2+) as cofactor. The cofactor is L-ascorbate.

The protein is PKHD-type hydroxylase IL0759 of Idiomarina loihiensis (strain ATCC BAA-735 / DSM 15497 / L2-TR).